The following is a 435-amino-acid chain: MDVNSPETTEKHLNEVSADAAKPNVPNPNDELLRRNPSSFPNLRIKIPTSSFSTFDGSSGYSPSRLQLRPPWPSLKRAAANPFSRQNKRRQGAGNVRIDDFSGGTGSDSDEAVEHYGGEENRAIERPEQSSRSMSEETVSSELEEEPQKVFTHTVTSWSNGFTVDDSSLKTLDDPENATFLEIISSMESPRELGQVRVQVKIISREEENYTESQAGSDSASTKPPPALAMRAKESAIERSEQSSKVLSGETDSAELQEQQQEDQPYEVVTYTVTIWRNGFTVDDDPFKSLDDPENAAFLEYMPEDNKFGVPTTTRSTSCSSQTHQELQTLAGSESTSTEPPLTTTQPPSMSSLVVDPAAPTTSIQLILADSTRIVTQFNTHHTIRDIRCFIDTSRPDGSKDYQLLIMGSPPTPLSDFDQTIEKAGIANSVLVQKF.

Disordered stretches follow at residues 1–150, 208–265, and 311–352; these read MDVN…PQKV, ENYT…EDQP, and PTTT…SMSS. The segment covering 49–62 has biased composition (low complexity); that stretch reads TSSFSTFDGSSGYS. Residues 112-129 are compositionally biased toward basic and acidic residues; sequence AVEHYGGEENRAIERPEQ. Residues 130–141 are compositionally biased toward low complexity; that stretch reads SSRSMSEETVSS. The region spanning 150–211 is the SEP 1 domain; sequence VFTHTVTSWS…IISREEENYT (62 aa). A compositionally biased stretch (polar residues) spans 211–222; the sequence is TESQAGSDSAST. Residues 231–242 show a composition bias toward basic and acidic residues; that stretch reads RAKESAIERSEQ. A compositionally biased stretch (acidic residues) spans 252-265; sequence DSAELQEQQQEDQP. In terms of domain architecture, SEP 2 spans 268 to 343; that stretch reads VVTYTVTIWR…ESTSTEPPLT (76 aa). Low complexity-rich tracts occupy residues 312–323 and 333–349; these read TTTRSTSCSSQT and SEST…QPPS. Residues 357–434 form the UBX domain; sequence PAAPTTSIQL…GIANSVLVQK (78 aa).

This Arabidopsis thaliana (Mouse-ear cress) protein is Plant UBX domain-containing protein 6.